A 118-amino-acid chain; its full sequence is Ribonuclease P protein component 4 (118 aa).

Residues C59, C62, C85, and C88 each contribute to the Zn(2+) site.

It belongs to the eukaryotic/archaeal RNase P protein component 4 family. As to quaternary structure, consists of a catalytic RNA component and at least 4-5 protein subunits. It depends on Zn(2+) as a cofactor.

It is found in the cytoplasm. It carries out the reaction Endonucleolytic cleavage of RNA, removing 5'-extranucleotides from tRNA precursor.. Functionally, part of ribonuclease P, a protein complex that generates mature tRNA molecules by cleaving their 5'-ends. This is Ribonuclease P protein component 4 from Sulfolobus acidocaldarius (strain ATCC 33909 / DSM 639 / JCM 8929 / NBRC 15157 / NCIMB 11770).